Here is a 235-residue protein sequence, read N- to C-terminus: MPWGLAWLYCLGILLDVALGNENLEIWTLTQDKECDLTGYLRGKLQYKNRLQYMKHYFPINYRIAVPYEGVLRVANITRLQKAHVSERELRYLWVLVSLNATESVMDVLLEGHPSWKYLQEVQTLLENVQRSLMDVEIGPHVEAVLSLLSTPGLSLKLVRPKALLDNCFRVMELLYCSCCKQSPILKWQDCELPRLHPHSPGSLMQCTATNVYPLSRQTPTSLPGSPSSSHGSLP.

Positions 1-20 are cleaved as a signal peptide; sequence MPWGLAWLYCLGILLDVALG. Asn100 carries N-linked (GlcNAc...) asparagine glycosylation.

Belongs to the IL-34 family. As to quaternary structure, homodimer. Interacts with CSF1R.

It localises to the secreted. In terms of biological role, cytokine that promotes the proliferation, survival and differentiation of monocytes and macrophages. Promotes the release of pro-inflammatory chemokines, and thereby plays an important role in innate immunity and in inflammatory processes. Plays an important role in the regulation of osteoclast proliferation and differentiation, and in the regulation of bone resorption. Signaling via CSF1R and its downstream effectors stimulates phosphorylation of MAPK1/ERK2 AND MAPK3/ERK1. The chain is Interleukin-34 (Il34) from Mus musculus (Mouse).